A 1011-amino-acid chain; its full sequence is Rap guanine nucleotide exchange factor 4 (1011 aa).

Residues 216 to 291 (SRAPHMIRDR…DKYLFYRFLD (76 aa)) form the DEP domain. 3',5'-cyclic AMP-binding positions include 422 to 425 (GKLA) and 432 to 433 (RA). The region spanning 496 to 634 (QKYTVMSGTP…ELEKIVKQIS (139 aa)) is the N-terminal Ras-GEF domain. One can recognise a Ras-GEF domain in the interval 772–1009 (SSKDLAYQMT…SQMSHRLEPR (238 aa)).

In terms of assembly, interacts with RAP1B, RIMS1 and RIMS2. Probably part of a complex with RIMS2 and GTP-activated RAB3A. Expressed in cerebellum, pituitary, adrenal gland and liver.

It localises to the cytoplasm. The protein localises to the membrane. In terms of biological role, guanine nucleotide exchange factor (GEF) for RAP1A, RAP1B and RAP2A small GTPases that is activated by binding cAMP. Seems not to activate RAB3A. Involved in cAMP-dependent, PKA-independent exocytosis through interaction with RIMS2. The chain is Rap guanine nucleotide exchange factor 4 (Rapgef4) from Mus musculus (Mouse).